We begin with the raw amino-acid sequence, 154 residues long: RxLR effector protein PexRD24 (154 aa).

The signal sequence occupies residues 1 to 22 (MHSSLLWLGAVVALLAVNNVTA). A RxLR-dEER motif is present at residues 53–67 (RSLRAVETSEDEEER). Residue lysine 138 is a short sequence motif, PP1c-binding motif.

This sequence belongs to the RxLR effector family. In terms of assembly, interacts with the potato PP1c family proteins PP1c-1, PP1c-2 and PP1c-3.

Its subcellular location is the secreted. It localises to the host nucleus. The protein localises to the host nucleoplasm. It is found in the host nucleolus. Effector that interacts with isoforms of host protein phosphatase type 1c (PP1c), mimicking a regulatory subunit and causing their re-localization within the host nucleus. The holoenzymes formed with PP1c isoforms act to promote late blight by attenuating jasmonic acid (JA)- and salicylic acid (SA)-mediated transcriptional responses of the host plant. The sequence is that of RxLR effector protein PexRD24 from Phytophthora infestans (strain T30-4) (Potato late blight agent).